A 230-amino-acid chain; its full sequence is Orotidine 5'-phosphate decarboxylase (230 aa).

Substrate-binding positions include Asp-11, Lys-34, 61 to 70 (DLKLHDIPNT), Thr-117, Arg-179, Gln-188, Gly-208, and Arg-209. The Proton donor role is filled by Lys-63.

Belongs to the OMP decarboxylase family. Type 1 subfamily. In terms of assembly, homodimer.

The enzyme catalyses orotidine 5'-phosphate + H(+) = UMP + CO2. It functions in the pathway pyrimidine metabolism; UMP biosynthesis via de novo pathway; UMP from orotate: step 2/2. Catalyzes the decarboxylation of orotidine 5'-monophosphate (OMP) to uridine 5'-monophosphate (UMP). The polypeptide is Orotidine 5'-phosphate decarboxylase (Streptococcus gordonii (strain Challis / ATCC 35105 / BCRC 15272 / CH1 / DL1 / V288)).